The sequence spans 536 residues: Phosphoenolpyruvate carboxykinase (ATP) (536 aa).

Substrate is bound by residues Arg-63, Tyr-203, and Lys-209. ATP is bound by residues Lys-209, His-228, and 244 to 252 (GLSGTGKTT). Mn(2+) contacts are provided by Lys-209 and His-228. Asp-265 is a Mn(2+) binding site. Residues Glu-293, Arg-329, 445 to 446 (RI), and Thr-451 each bind ATP. Substrate is bound at residue Arg-329.

This sequence belongs to the phosphoenolpyruvate carboxykinase (ATP) family. As to quaternary structure, monomer. The cofactor is Mn(2+).

It is found in the cytoplasm. It catalyses the reaction oxaloacetate + ATP = phosphoenolpyruvate + ADP + CO2. It functions in the pathway carbohydrate biosynthesis; gluconeogenesis. Functionally, involved in the gluconeogenesis. Catalyzes the conversion of oxaloacetate (OAA) to phosphoenolpyruvate (PEP) through direct phosphoryl transfer between the nucleoside triphosphate and OAA. In Colwellia psychrerythraea (strain 34H / ATCC BAA-681) (Vibrio psychroerythus), this protein is Phosphoenolpyruvate carboxykinase (ATP).